A 298-amino-acid chain; its full sequence is Possible hemolysin C (298 aa).

2 consecutive CBS domains span residues methionine 80–cysteine 141 and leucine 145–glutamate 202.

Belongs to the UPF0053 family. Hemolysin C subfamily.

This is Possible hemolysin C (tlyC) from Rickettsia canadensis (strain McKiel).